The sequence spans 244 residues: Probable proteasome subunit alpha type-1 (244 aa).

Belongs to the peptidase T1A family. As to quaternary structure, the 26S proteasome consists of a 20S proteasome core and two 19S regulatory subunits. The 20S proteasome core is composed of 28 subunits that are arranged in four stacked rings, resulting in a barrel-shaped structure. The two end rings are each formed by seven alpha subunits, and the two central rings are each formed by seven beta subunits. The catalytic chamber with the active sites is on the inside of the barrel.

Its subcellular location is the cytoplasm. The protein localises to the nucleus. Functionally, the proteasome is a multicatalytic proteinase complex which is characterized by its ability to cleave peptides with Arg, Phe, Tyr, Leu, and Glu adjacent to the leaving group at neutral or slightly basic pH. The proteasome has an ATP-dependent proteolytic activity. In Schizosaccharomyces pombe (strain 972 / ATCC 24843) (Fission yeast), this protein is Probable proteasome subunit alpha type-1.